Here is a 226-residue protein sequence, read N- to C-terminus: Enolase-phosphatase E1 (226 aa).

It belongs to the HAD-like hydrolase superfamily. MasA/MtnC family. Monomer. Requires Mg(2+) as cofactor.

It carries out the reaction 5-methylsulfanyl-2,3-dioxopentyl phosphate + H2O = 1,2-dihydroxy-5-(methylsulfanyl)pent-1-en-3-one + phosphate. It participates in amino-acid biosynthesis; L-methionine biosynthesis via salvage pathway; L-methionine from S-methyl-5-thio-alpha-D-ribose 1-phosphate: step 3/6. It functions in the pathway amino-acid biosynthesis; L-methionine biosynthesis via salvage pathway; L-methionine from S-methyl-5-thio-alpha-D-ribose 1-phosphate: step 4/6. Bifunctional enzyme that catalyzes the enolization of 2,3-diketo-5-methylthiopentyl-1-phosphate (DK-MTP-1-P) into the intermediate 2-hydroxy-3-keto-5-methylthiopentenyl-1-phosphate (HK-MTPenyl-1-P), which is then dephosphorylated to form the acireductone 1,2-dihydroxy-3-keto-5-methylthiopentene (DHK-MTPene). The polypeptide is Enolase-phosphatase E1 (Shewanella sp. (strain ANA-3)).